A 232-amino-acid chain; its full sequence is Cobalt transport protein CbiM (232 aa).

6 consecutive transmembrane segments (helical) span residues G6 to H26, L43 to V63, I84 to G104, T107 to Y127, V135 to V155, and I181 to M201.

This sequence belongs to the CbiM family. As to quaternary structure, forms an energy-coupling factor (ECF) transporter complex composed of an ATP-binding protein (A component, CbiO), a transmembrane protein (T component, CbiQ) and 2 possible substrate-capture proteins (S components, CbiM and CbiN) of unknown stoichimetry.

Its subcellular location is the cell membrane. It participates in cofactor biosynthesis; adenosylcobalamin biosynthesis. In terms of biological role, part of the energy-coupling factor (ECF) transporter complex CbiMNOQ involved in cobalt import. In Streptomyces coelicolor (strain ATCC BAA-471 / A3(2) / M145), this protein is Cobalt transport protein CbiM.